A 509-amino-acid chain; its full sequence is Maturase K (509 aa).

It belongs to the intron maturase 2 family. MatK subfamily.

It localises to the plastid. The protein resides in the chloroplast. In terms of biological role, usually encoded in the trnK tRNA gene intron. Probably assists in splicing its own and other chloroplast group II introns. This is Maturase K from Nicotiana alata (Winged tobacco).